Here is a 353-residue protein sequence, read N- to C-terminus: Protein AC18 (353 aa).

It localises to the host nucleus. Its subcellular location is the host cytoplasm. Functionally, may play a role in occlusion-derived virions (ODV) formation and/or regulation of late viral gene expression. The chain is Protein AC18 (DA41) from Autographa californica nuclear polyhedrosis virus (AcMNPV).